The primary structure comprises 413 residues: Glucose-1-phosphate adenylyltransferase (413 aa).

Alpha-D-glucose 1-phosphate-binding positions include Gly169, 184–185 (EK), and Ser201.

This sequence belongs to the bacterial/plant glucose-1-phosphate adenylyltransferase family. In terms of assembly, homotetramer.

The catalysed reaction is alpha-D-glucose 1-phosphate + ATP + H(+) = ADP-alpha-D-glucose + diphosphate. It participates in glycan biosynthesis; glycogen biosynthesis. In terms of biological role, involved in the biosynthesis of ADP-glucose, a building block required for the elongation reactions to produce glycogen. Catalyzes the reaction between ATP and alpha-D-glucose 1-phosphate (G1P) to produce pyrophosphate and ADP-Glc. This chain is Glucose-1-phosphate adenylyltransferase, found in Trichlorobacter lovleyi (strain ATCC BAA-1151 / DSM 17278 / SZ) (Geobacter lovleyi).